Consider the following 44-residue polypeptide: DVCESVAGRCIHNGCWCERSAPHGNCCNTSGCTARWWCPGTKWD.

4 disulfides stabilise this stretch: Cys-3-Cys-15, Cys-10-Cys-27, Cys-17-Cys-32, and Cys-26-Cys-38. Trp-16 carries the post-translational modification 6'-bromotryptophan. Pro-22 carries the 4-hydroxyproline modification. Residues Trp-36 and Trp-37 each carry the 6'-bromotryptophan modification. Pro-39 carries the post-translational modification 4-hydroxyproline. Trp-43 bears the 6'-bromotryptophan mark.

Expressed by the venom duct.

The protein resides in the secreted. Mu-conotoxins block voltage-gated sodium channels. This toxin reversibly blocks voltage-gated sodium channel in cephalopods, with no alteration in the voltage dependence of sodium conductance or on the kinetics of inactivation. This is Mu-conotoxin-like Cal 12.1.2f from Californiconus californicus (California cone).